The primary structure comprises 185 residues: Small ribosomal subunit protein uS4c (185 aa).

The 63-residue stretch at 72–134 folds into the S4 RNA-binding domain; sequence MRLDNVIFRL…PTSCNALKGE (63 aa). Residues 132-154 form a disordered region; it reads KGESPGGGETPDHLTASLSEGSR.

The protein belongs to the universal ribosomal protein uS4 family. As to quaternary structure, part of the 30S ribosomal subunit. Contacts protein S5. The interaction surface between S4 and S5 is involved in control of translational fidelity.

It is found in the plastid. The protein localises to the chloroplast. In terms of biological role, one of the primary rRNA binding proteins, it binds directly to 16S rRNA where it nucleates assembly of the body of the 30S subunit. Its function is as follows. With S5 and S12 plays an important role in translational accuracy. In Woodwardia radicans (Rooting chainfern), this protein is Small ribosomal subunit protein uS4c (rps4).